Reading from the N-terminus, the 596-residue chain is Leucine-rich repeat and IQ domain-containing protein 4 (596 aa).

LRR repeat units lie at residues 22-44, 59-83, 84-106, 108-129, 130-152, 153-176, 177-200, 202-223, 224-246, 248-269, 270-293, 295-315, 317-337, 338-361, 362-384, 385-407, 410-433, 434-457, 459-479, 480-502, 504-525, and 527-549; these read LPRL…LLRQ, LTDR…ILAL, KELE…IQQL, NTKV…LGAL, SSLE…VVSR, LRTL…ICKS, LHHL…IVNQ, KLRE…LCVL, YNLE…IGHL, RLQK…LSQC, SKLS…ELLT, LTEV…LCSW, SLHL…SFKR, LINL…ICAL, KNLE…ISLL, SNLK…IFSL, LEKL…IKRL, MNLK…GLMP, LEVL…ICRT, RNLR…LDHL, NLKV…VCNQ, and NEAI…TIQA. An IQ domain is found at 540 to 569; that stretch reads RKMMATTIQAWWRGIMVRKGYGSYEELLKA. The segment covering 569–587 has biased composition (basic residues); sequence ARKKGKSPPKDKKGKKAAK. The disordered stretch occupies residues 569–596; the sequence is ARKKGKSPPKDKKGKKAAKGKPEKGNKK.

This chain is Leucine-rich repeat and IQ domain-containing protein 4 (Lrriq4), found in Mus musculus (Mouse).